The primary structure comprises 212 residues: Uridine kinase (212 aa).

13–20 (GASASGKS) is a binding site for ATP.

This sequence belongs to the uridine kinase family.

The protein localises to the cytoplasm. It catalyses the reaction uridine + ATP = UMP + ADP + H(+). The catalysed reaction is cytidine + ATP = CMP + ADP + H(+). Its pathway is pyrimidine metabolism; CTP biosynthesis via salvage pathway; CTP from cytidine: step 1/3. It participates in pyrimidine metabolism; UMP biosynthesis via salvage pathway; UMP from uridine: step 1/1. This chain is Uridine kinase, found in Shewanella amazonensis (strain ATCC BAA-1098 / SB2B).